We begin with the raw amino-acid sequence, 338 residues long: Transcription factor MYB76 (338 aa).

HTH myb-type domains are found at residues 9 to 65 (GEGL…KPDI) and 66 to 116 (KRGE…KKRL). 2 consecutive DNA-binding regions (H-T-H motif) follow at residues 37-61 (WRDI…TNYL) and 89-112 (WSVI…NTHL). Disordered stretches follow at residues 123-171 (PVTH…SSNL) and 176-195 (SKIS…CKKR). Residues 140–154 (MKFDFQKKSNQDEHS) show a composition bias toward basic and acidic residues. Residues 155-171 (SQSSSTTPASLPLSSNL) are compositionally biased toward low complexity.

In terms of assembly, can form complexes with MYC2, MYC3 or MYC4. In terms of tissue distribution, expressed in both vegetative and generative organs. Mostly present in inflorescences, flowers and seedlings, in the transition zone between roots and the foliar part, and stems, and, to a lower extent, in leaves (in midvein and trichomes).

The protein resides in the nucleus. In terms of biological role, plays a role in determining the spatial distribution of aliphatic glucosinolates (AGLSs) within the leaf, mostly short chained. Together with MYB28/HAG1 and MYB29/HAG3, promotes aliphatic glucosinolate biosynthesis and represses indolic glucosinolate biosynthesis, but could not activate AGSL biosynthesis on its own. This Arabidopsis thaliana (Mouse-ear cress) protein is Transcription factor MYB76 (MYB76).